The following is a 212-amino-acid chain: Phosphatidylserine decarboxylase proenzyme (212 aa).

S182 acts as the Schiff-base intermediate with substrate; via pyruvic acid in catalysis. S182 is subject to Pyruvic acid (Ser); by autocatalysis.

This sequence belongs to the phosphatidylserine decarboxylase family. PSD-A subfamily. As to quaternary structure, heterodimer of a large membrane-associated beta subunit and a small pyruvoyl-containing alpha subunit. It depends on pyruvate as a cofactor. Is synthesized initially as an inactive proenzyme. Formation of the active enzyme involves a self-maturation process in which the active site pyruvoyl group is generated from an internal serine residue via an autocatalytic post-translational modification. Two non-identical subunits are generated from the proenzyme in this reaction, and the pyruvate is formed at the N-terminus of the alpha chain, which is derived from the carboxyl end of the proenzyme. The post-translation cleavage follows an unusual pathway, termed non-hydrolytic serinolysis, in which the side chain hydroxyl group of the serine supplies its oxygen atom to form the C-terminus of the beta chain, while the remainder of the serine residue undergoes an oxidative deamination to produce ammonia and the pyruvoyl prosthetic group on the alpha chain.

The protein localises to the cell membrane. The catalysed reaction is a 1,2-diacyl-sn-glycero-3-phospho-L-serine + H(+) = a 1,2-diacyl-sn-glycero-3-phosphoethanolamine + CO2. It functions in the pathway phospholipid metabolism; phosphatidylethanolamine biosynthesis; phosphatidylethanolamine from CDP-diacylglycerol: step 2/2. Functionally, catalyzes the formation of phosphatidylethanolamine (PtdEtn) from phosphatidylserine (PtdSer). The chain is Phosphatidylserine decarboxylase proenzyme from Paraburkholderia xenovorans (strain LB400).